The sequence spans 240 residues: ATP-dependent dethiobiotin synthetase BioD (240 aa).

13-18 is a binding site for ATP; sequence GVGKTI. Position 17 (Thr-17) interacts with Mg(2+). Lys-38 is a catalytic residue. Residue Thr-42 coordinates substrate. Residues Asp-55, 116–119, and 214–216 each bind ATP; these read EGVG and PYL. Mg(2+) is bound by residues Asp-55 and Glu-116.

It belongs to the dethiobiotin synthetase family. As to quaternary structure, homodimer. It depends on Mg(2+) as a cofactor.

It is found in the cytoplasm. The catalysed reaction is (7R,8S)-7,8-diammoniononanoate + CO2 + ATP = (4R,5S)-dethiobiotin + ADP + phosphate + 3 H(+). It functions in the pathway cofactor biosynthesis; biotin biosynthesis; biotin from 7,8-diaminononanoate: step 1/2. Functionally, catalyzes a mechanistically unusual reaction, the ATP-dependent insertion of CO2 between the N7 and N8 nitrogen atoms of 7,8-diaminopelargonic acid (DAPA, also called 7,8-diammoniononanoate) to form a ureido ring. This Thermodesulfovibrio yellowstonii (strain ATCC 51303 / DSM 11347 / YP87) protein is ATP-dependent dethiobiotin synthetase BioD.